Reading from the N-terminus, the 618-residue chain is Proline--tRNA ligase (618 aa).

The protein belongs to the class-II aminoacyl-tRNA synthetase family. ProS type 1 subfamily. As to quaternary structure, homodimer.

It is found in the cytoplasm. The enzyme catalyses tRNA(Pro) + L-proline + ATP = L-prolyl-tRNA(Pro) + AMP + diphosphate. Catalyzes the attachment of proline to tRNA(Pro) in a two-step reaction: proline is first activated by ATP to form Pro-AMP and then transferred to the acceptor end of tRNA(Pro). As ProRS can inadvertently accommodate and process non-cognate amino acids such as alanine and cysteine, to avoid such errors it has two additional distinct editing activities against alanine. One activity is designated as 'pretransfer' editing and involves the tRNA(Pro)-independent hydrolysis of activated Ala-AMP. The other activity is designated 'posttransfer' editing and involves deacylation of mischarged Ala-tRNA(Pro). The misacylated Cys-tRNA(Pro) is not edited by ProRS. This is Proline--tRNA ligase from Streptococcus pyogenes serotype M5 (strain Manfredo).